We begin with the raw amino-acid sequence, 356 residues long: Probable arabinogalactan endo-beta-1,4-galactanase A (356 aa).

The signal sequence occupies residues 1 to 21 (MLGKMILLPLFVLLCHSLASA). N-linked (GlcNAc...) asparagine glycosylation occurs at asparagine 133. Glutamate 157 acts as the Proton donor in catalysis. The Nucleophile role is filled by glutamate 268.

Belongs to the glycosyl hydrolase 53 family.

It localises to the secreted. It carries out the reaction The enzyme specifically hydrolyzes (1-&gt;4)-beta-D-galactosidic linkages in type I arabinogalactans.. Endogalactanase involved in the degradation of plant cell wall polysaccharides, and more particularly of hairy regions of pectin. In Neosartorya fischeri (strain ATCC 1020 / DSM 3700 / CBS 544.65 / FGSC A1164 / JCM 1740 / NRRL 181 / WB 181) (Aspergillus fischerianus), this protein is Probable arabinogalactan endo-beta-1,4-galactanase A (galA).